We begin with the raw amino-acid sequence, 230 residues long: MAREGKRLKSAYADIDRDKFYSLADAVKAIKTRAVAKFDETIEIALNLGVDPRHADQMVRGVVELPHGTGKTVRVAVFAKGDKAEEARKAGADIVGEQDLFDACNAGNMDFDRVIATPDLMGLVGRLGKVLGPRGLMPNPKLGTVTANVTEAVRAAKAGQVQFRVEKAGIVHAGIGKASFSEEKLAENVKAFVDAITKAKPQGAKGTYLKKVSLSSTMGPGVKLDVATLA.

The protein belongs to the universal ribosomal protein uL1 family. As to quaternary structure, part of the 50S ribosomal subunit.

Functionally, binds directly to 23S rRNA. The L1 stalk is quite mobile in the ribosome, and is involved in E site tRNA release. In terms of biological role, protein L1 is also a translational repressor protein, it controls the translation of the L11 operon by binding to its mRNA. This Paramagnetospirillum magneticum (strain ATCC 700264 / AMB-1) (Magnetospirillum magneticum) protein is Large ribosomal subunit protein uL1.